We begin with the raw amino-acid sequence, 172 residues long: MDRAEKREFVAWLNGAFKESGSVVVAHYTGLTVAQMSDLRSKMRDAGGSVKVAKNRLAKIALQGTESEGIVDLFTGQTVVAYANDPITAPKVAVEFAKANDKLVILGGAMGATTLNADGVKSLASLPSLDELRAKLVGMIQTPAQRLAVLTSAPAGQIARVIGAHARKNEAA.

Belongs to the universal ribosomal protein uL10 family. In terms of assembly, part of the ribosomal stalk of the 50S ribosomal subunit. The N-terminus interacts with L11 and the large rRNA to form the base of the stalk. The C-terminus forms an elongated spine to which L12 dimers bind in a sequential fashion forming a multimeric L10(L12)X complex.

In terms of biological role, forms part of the ribosomal stalk, playing a central role in the interaction of the ribosome with GTP-bound translation factors. In Brucella abortus biovar 1 (strain 9-941), this protein is Large ribosomal subunit protein uL10 (rplJ).